The chain runs to 323 residues: NADH-cytochrome b5 reductase 2 (323 aa).

The helical transmembrane segment at 32-48 threads the bilayer; that stretch reads LAPIYVAVGLTGLGVGL. In terms of domain architecture, FAD-binding FR-type spans 72 to 177; sequence QGWVDLKLAQ…KGPIPKYPWE (106 aa). 180–215 lines the FAD pocket; the sequence is KHKHICLIAGGTGITPMYQLARKIFKDPEDQTKVTL.

The protein belongs to the flavoprotein pyridine nucleotide cytochrome reductase family. FAD is required as a cofactor.

The protein localises to the mitochondrion outer membrane. The catalysed reaction is 2 Fe(III)-[cytochrome b5] + NADH = 2 Fe(II)-[cytochrome b5] + NAD(+) + H(+). Its function is as follows. May mediate the reduction of outer membrane cytochrome b5. The sequence is that of NADH-cytochrome b5 reductase 2 (mcr1) from Neosartorya fischeri (strain ATCC 1020 / DSM 3700 / CBS 544.65 / FGSC A1164 / JCM 1740 / NRRL 181 / WB 181) (Aspergillus fischerianus).